We begin with the raw amino-acid sequence, 670 residues long: Transcription factor vib-1 (670 aa).

A DNA-binding region (NDT80) is located at residues 106–341 (TEMVQDLRDD…RSPRNFQARK (236 aa)). 2 stretches are compositionally biased toward polar residues: residues 394 to 438 (FTSA…TTSM) and 553 to 568 (LGNS…QHHP). Disordered regions lie at residues 394-457 (FTSA…SYTA) and 496-670 (SAPP…WNAT). Residues 592-605 (ASAPASAPTSAAPP) show a composition bias toward low complexity. Positions 611 to 631 (PSQSWTSTAGEGQTSSYTNGG) are enriched in polar residues.

The protein resides in the nucleus. Its subcellular location is the cytoplasm. In terms of biological role, transcription factor that acts as a positive regulator of nonrepressible acid phosphatase activity. Is a major regulator of responses to nitrogen and carbon starvation and is essential for the expression of genes involved in vegetative incompatibility (like pin-c, het-6, and tol). Vegetative incompatibility is a non-self-recognition system ubiquitous in filamentous fungi which results in programmed cell death. This chain is Transcription factor vib-1 (vib-1), found in Neurospora crassa (strain ATCC 24698 / 74-OR23-1A / CBS 708.71 / DSM 1257 / FGSC 987).